The sequence spans 179 residues: NADH-quinone oxidoreductase subunit B (179 aa).

[4Fe-4S] cluster contacts are provided by C52, C53, C117, and C147.

Belongs to the complex I 20 kDa subunit family. As to quaternary structure, NDH-1 is composed of 14 different subunits. Subunits NuoB, C, D, E, F, and G constitute the peripheral sector of the complex. [4Fe-4S] cluster serves as cofactor.

The protein resides in the cell inner membrane. It carries out the reaction a quinone + NADH + 5 H(+)(in) = a quinol + NAD(+) + 4 H(+)(out). In terms of biological role, NDH-1 shuttles electrons from NADH, via FMN and iron-sulfur (Fe-S) centers, to quinones in the respiratory chain. The immediate electron acceptor for the enzyme in this species is believed to be ubiquinone. Couples the redox reaction to proton translocation (for every two electrons transferred, four hydrogen ions are translocated across the cytoplasmic membrane), and thus conserves the redox energy in a proton gradient. This chain is NADH-quinone oxidoreductase subunit B, found in Ehrlichia chaffeensis (strain ATCC CRL-10679 / Arkansas).